The sequence spans 486 residues: 23S rRNA (uracil(1939)-C(5))-methyltransferase RlmD (486 aa).

The region spanning 14-76 (AAQDGSGLPE…NHWEQANLTA (63 aa)) is the TRAM domain. Cys89, Cys99, Cys102, and Cys181 together coordinate [4Fe-4S] cluster. S-adenosyl-L-methionine contacts are provided by Gln289, Phe318, Asn323, Glu339, Asn374, and Asp395. The active-site Nucleophile is Cys442.

It belongs to the class I-like SAM-binding methyltransferase superfamily. RNA M5U methyltransferase family. RlmD subfamily.

The enzyme catalyses uridine(1939) in 23S rRNA + S-adenosyl-L-methionine = 5-methyluridine(1939) in 23S rRNA + S-adenosyl-L-homocysteine + H(+). Its function is as follows. Catalyzes the formation of 5-methyl-uridine at position 1939 (m5U1939) in 23S rRNA. The sequence is that of 23S rRNA (uracil(1939)-C(5))-methyltransferase RlmD from Verminephrobacter eiseniae (strain EF01-2).